Reading from the N-terminus, the 940-residue chain is Chromatin assembly factor 1 subunit FSM (940 aa).

3 disordered regions span residues 317–473 (NVDD…DPCT), 638–682 (VDSD…FFVP), and 919–940 (KTTQ…PSSQ). Polar residues predominate over residues 320–329 (DSQLQKNTST). The stretch at 329–439 (TNEKDTQKAQ…LKKQLAIQKQ (111 aa)) forms a coiled coil. The span at 330–429 (NEKDTQKAQK…QKRREKEAVQ (100 aa)) shows a compositional bias: basic and acidic residues. Residues 430 to 440 (LKKQLAIQKQA) show a composition bias toward low complexity. Positions 445–461 (RFFKNKKDSEKLEKPGG) are enriched in basic and acidic residues. The segment covering 638 to 650 (VDSDDEWEEEDPG) has biased composition (acidic residues).

This sequence belongs to the CHAF1A family. In terms of assembly, component of the chromatin assembly factor 1 (CAF-1) complex, composed of FSM (FAS1), FAS2 and MSI1. In terms of tissue distribution, in embryo, expressed in leaf primordia, coleoptile and radicle. In seedlings, expressed in cell division zone of roots, SAM and leaf primordia. Expressed in floral organ primordia.

It localises to the nucleus. Component of the chromatin assembly factor complex (CAF-1) involved in chromatin assembly following DNA replication and DNA repair. Required for several aspects of development, including apical meristem maintenance by regulating the durations of the S- and G2-phases of the cell cycle through its chromatin assembly activity. The chain is Chromatin assembly factor 1 subunit FSM (FSM) from Oryza sativa subsp. japonica (Rice).